The following is a 521-amino-acid chain: Vang-like protein 2 (521 aa).

The segment at 1 to 81 is disordered; that stretch reads MDTESQYSGY…TTVVTGTSEH (81 aa). Topologically, residues 1–108 are cytoplasmic; that stretch reads MDTESQYSGY…VPLDCSRHLG (108 aa). Residues 15-33 are compositionally biased toward basic residues; it reads GHSRSSRKHRDRRDRHRSK. The segment covering 57–67 has biased composition (basic and acidic residues); sequence ESTRGDERDDN. A compositionally biased stretch (low complexity) spans 69 to 81; the sequence is GETTTVVTGTSEH. Residues 109–129 traverse the membrane as a helical segment; it reads VAAGATLALLSFLTPLAFLLL. At 130–147 the chain is on the extracellular side; that stretch reads PPLLWREELEPCGTACEG. Residues 148-168 traverse the membrane as a helical segment; sequence LFISVAFKLLILLLGSWALFF. The Cytoplasmic segment spans residues 169–178; that stretch reads RRPKASLPRV. Residues 179 to 199 traverse the membrane as a helical segment; it reads FVLRALLMVLVFLLVVSYWLF. Topologically, residues 200–217 are extracellular; that stretch reads YGVRILDARERSYQGVVQ. The chain crosses the membrane as a helical span at residues 218–238; that stretch reads FAVSLVDALLFVHYLAVVLLE. Topologically, residues 239–521 are cytoplasmic; the sequence is LRQLQPQFTL…VMRLQSETSV (283 aa).

This sequence belongs to the Vang family. Homodimer and heterodimer with VANGL1. Interacts through its C-terminal region with the N-terminal half of DVL1, DVL2 and DVL3. The PDZ domain of DVL1, DVL2 and DVL3 is required for the interaction. Also interacts with the PDZ domains of MAGI3, SCRIB/SCRB1 and FZD3. Interacts with PRICKLE3.

Its subcellular location is the cell membrane. In terms of biological role, involved in the control of early morphogenesis and patterning of both axial midline structures and the development of neural plate. Plays a role in the regulation of planar cell polarity, particularly in the orientation of stereociliary bundles in the cochlea. Required for polarization and movement of myocardializing cells in the outflow tract and seems to act via RHOA signaling to regulate this process. Required for cell surface localization of FZD3 and FZD6 in the inner ear. The protein is Vang-like protein 2 (VANGL2) of Homo sapiens (Human).